Consider the following 382-residue polypeptide: Aminotransferase FGSG_00049 (382 aa).

Arg80 contributes to the pyridoxal 5'-phosphate binding site. Lys181 is subject to N6-(pyridoxal phosphate)lysine. Glu217 lines the pyridoxal 5'-phosphate pocket.

Belongs to the class-IV pyridoxal-phosphate-dependent aminotransferase family. It depends on pyridoxal 5'-phosphate as a cofactor.

The protein operates within mycotoxin biosynthesis. Functionally, aminotransferase; part of the gene cluster that mediates the biosynthesis of gramillins A and B, bicyclic lipopeptides that induce cell death in maize leaves but not in wheat leaves. The nonribosomal peptide synthetase GRA1 incorporates respectively a glutamic adic (Glu), a leucine (Leu), a serine (Ser), a hydroxyglutamine (HOGln), a 2-amino decanoic acid, and 2 cysteins (CysB and CysA). The biosynthesis of 2-amino decanoic acid incorporated in gramillins could be initiated by a fatty acid synthase composed of the alpha and beta subunits FGSG_00036 and FGSG_11656. The cytochrome P450 monooxygenase FGSG_15680 could hydroxylate the fatty acid chain. Subsequent oxidation to the ketone by the oxidoreductase FGSG_00048 and transamination by aminotransferase FGSG_00049 could form 2-amino-decanoic acid. On the other hand, FGSG_15680 could also be responsible for the HO-modified glutamine at the gamma-position. Whether hydroxylation occurs on the fully assembled product or on the Gln residue prior to assembly into the gramillins requires further proof. The thioredoxin FGSG_00043 could also be required for the disulfide-bond formation between CysA and CysB. The specific involvement of the remaining proteins from the cluster is more difficult to discern, but could have broader regulatory (FGSG_00040 and FGSG_11657) or enzymatic functions (FGSG_00044 and FGSG_00045). The final C-domain of GRA1 does not possess the expected sequence of a termination CT domain, often implicated in macrocyclization and release of a cyclopeptidein fungal NRPs; and the thioesterase FGSG_00047 may act in concert with the terminal C-domain of GRA1 to catalyze the formation of the macrocyclic anhydride and release of the products. This chain is Aminotransferase FGSG_00049, found in Gibberella zeae (strain ATCC MYA-4620 / CBS 123657 / FGSC 9075 / NRRL 31084 / PH-1) (Wheat head blight fungus).